The following is a 250-amino-acid chain: Probable transcriptional regulatory protein Cag_0165 (250 aa).

It belongs to the TACO1 family.

The protein localises to the cytoplasm. This is Probable transcriptional regulatory protein Cag_0165 from Chlorobium chlorochromatii (strain CaD3).